A 286-amino-acid polypeptide reads, in one-letter code: Deleted in azoospermia-like (286 aa).

The RRM domain occupies 30–105; that stretch reads NTVFVGGIDI…KKLKLGPAIR (76 aa). One can recognise a DAZ domain in the interval 155–180; the sequence is ACPYPSSPPMAIQQIPVGCQQPSYFQ.

Belongs to the RRM DAZ family. Interacts with the C-terminus of pabp1 and with epabp. Prior to oocyte maturation, found in a complex with epabp and pum2 proteins and spdy1 mRNA; pum2 dissociates from the complex during maturation. As to expression, germ-line specific; expressed in adult testis and ovary. Localized specifically to the oocyte and embryonic germ plasm and to migrating primordial germ cells (PGCs).

It is found in the cytoplasm. Functionally, RNA-binding protein that is required for primordial germ cell (PGC) differentiation and indirectly necessary for the migration of PGCs through the endoderm. May promote meiotic cell division during spermatogenesis. Shows a preference for G- and U-rich RNAs and probably binds the 3'-UTR of target mRNAs. Stimulates the initiation of translation of mRNAs through the recruitment of poly(A)-binding proteins (PABPs). This Xenopus tropicalis (Western clawed frog) protein is Deleted in azoospermia-like.